The chain runs to 430 residues: MILIKNAQIINSLHDKVEKADILIVDDKIKKIGKDIEENPEKMTIIDASGKVVMPSFTDIHCHLREPGFEYKEDIKSGSRSAAAGGFTTICCMPNTNPPVDNRAMVAYIKYRAREVSPIEVLPVGAITKGLLGEELAEIGFMKEEGAIAISDDGKCVMNANLMKNALLYSRDFSIPVISHCEDTNLSEGGQINLGYVSTITGLRGIPREAESVIIARDILLAKETKSHLHITHVSTKESVRLIKMAKEWGVNVTADTCPHYISLTEEEVLGFNTNAKVNPPLRTQEDVEALIEGLKEGVIDCISTDHAPHHKDEKNVEFNLAASGTIGFETAFSVLFTYLVEKNGFDIGKIVELLNHNPRKIIGLSPNVLKEGEKANLVIVDLKKKWEVKEENIVSKSKNSVFLGKLLTSYVETVIYNGKILKKDGVLNC.

Zn(2+)-binding residues include histidine 61 and histidine 63. Residues 63–65 (HLR) and asparagine 95 contribute to the substrate site. Residues aspartate 153, histidine 180, and histidine 233 each contribute to the Zn(2+) site. Asparagine 279 is a binding site for substrate. Zn(2+) is bound at residue aspartate 306. Residue aspartate 306 is part of the active site. Histidine 310 is a substrate binding site.

This sequence belongs to the metallo-dependent hydrolases superfamily. DHOase family. Class I DHOase subfamily. Zn(2+) is required as a cofactor.

The enzyme catalyses (S)-dihydroorotate + H2O = N-carbamoyl-L-aspartate + H(+). It functions in the pathway pyrimidine metabolism; UMP biosynthesis via de novo pathway; (S)-dihydroorotate from bicarbonate: step 3/3. Catalyzes the reversible cyclization of carbamoyl aspartate to dihydroorotate. The chain is Dihydroorotase from Caldicellulosiruptor saccharolyticus (strain ATCC 43494 / DSM 8903 / Tp8T 6331).